We begin with the raw amino-acid sequence, 72 residues long: Potassium channel toxin kappa-KTx 5.1 (72 aa).

An N-terminal signal peptide occupies residues 1-23 (MKLLPLLFVILIVCAILPDEASC). The propeptide occupies 24–43 (DQSELERKEENFKDESREIV). 2 disulfides stabilise this stretch: C47–C64 and C51–C60. A Histidine amide modification is found at H70.

This sequence belongs to the short scorpion toxin superfamily. Potassium channel inhibitor kappa-KTx family. Kappa-KTx 5 subfamily. Expressed by the venom gland.

It is found in the secreted. Functionally, weak blocker of potassium channels Kv1.1/KCNA1 (IC(50)=578.5 nM-9.9 uM) and Kv1.6/KCNA6 (~60% block at 30 uM of toxin). Acts by binding to the pore and occluding it. Has a voltage-dependent mode of action, which can be explained by a high content of basic residues causing repulsions at higher membrane voltages. Shows a weak interaction with muscle-type nicotinic acetylcholine receptors (nAChR), since it inhibits alpha-bungarotoxin binding to muscle-type nAChR from T.californica (IC(50)=1.4 uM). This suggests it probably weakly inhibits muscle nAChR. The mode of binding to potassium channels of this toxin differs from its homologs (including HefuTx1), since it lacks the key aromatic residue of the functional dyad. In contrast, its functionally important site is composed of a number of basic residues. The polypeptide is Potassium channel toxin kappa-KTx 5.1 (Heterometrus laoticus (Thai giant scorpion)).